We begin with the raw amino-acid sequence, 147 residues long: Protein phosphatase 1 regulatory subunit 14B (147 aa).

Residues 1–55 (MADSGTAGGAALAAPAPGPGSGGPGPRVYFQSPPGAAGEGPGGADDEGPVRRQGK) are disordered. Alanine 2 is modified (N-acetylalanine). Serine 21 is subject to Phosphoserine. Tyrosine 29 is modified (phosphotyrosine). Position 32 is a phosphoserine (serine 32). Threonine 57 carries the post-translational modification Phosphothreonine. Residues 61 to 103 (DRKELRKRLNLEEWILEQLTRLYDCQEEEIPELEIDVDELLDM) are a coiled coil.

The protein belongs to the PP1 inhibitor family. In terms of processing, phosphorylated primarily on Thr-57 by PKC (in vitro). An unknown Ser is also phosphorylated by PKC (in vitro). Ubiquitous. Expressed at low levels.

The protein localises to the cytoplasm. Inhibitor of PPP1CA. Has over 50-fold higher inhibitory activity when phosphorylated. This Homo sapiens (Human) protein is Protein phosphatase 1 regulatory subunit 14B (PPP1R14B).